The chain runs to 76 residues: Conotoxin Cl6.4 (76 aa).

A signal peptide spans Met1–Thr19. A propeptide spanning residues Glu20–Glu47 is cleaved from the precursor. 3 cysteine pairs are disulfide-bonded: Cys50-Cys66, Cys57-Cys70, and Cys65-Cys75.

As to expression, expressed by the venom duct.

It localises to the secreted. This Californiconus californicus (California cone) protein is Conotoxin Cl6.4.